Here is a 156-residue protein sequence, read N- to C-terminus: Ribosomal RNA large subunit methyltransferase H (156 aa).

Residues Leu72, Gly104, and 123–128 (LGKMVW) contribute to the S-adenosyl-L-methionine site.

This sequence belongs to the RNA methyltransferase RlmH family. Homodimer.

The protein resides in the cytoplasm. The catalysed reaction is pseudouridine(1915) in 23S rRNA + S-adenosyl-L-methionine = N(3)-methylpseudouridine(1915) in 23S rRNA + S-adenosyl-L-homocysteine + H(+). Functionally, specifically methylates the pseudouridine at position 1915 (m3Psi1915) in 23S rRNA. This chain is Ribosomal RNA large subunit methyltransferase H, found in Roseobacter denitrificans (strain ATCC 33942 / OCh 114) (Erythrobacter sp. (strain OCh 114)).